The sequence spans 431 residues: MNLLIKNVALLSMKEEQPLMENTNIYIEGDTITYIGEINPDIKVDRVIDGTKKIATPGLINAHTHLGMSLLRNYADDVPLFDWLSKHIWPVESKLSAEDVYWGSLLSMIEMIYSGTTTFCDMYFFMDEVAKATEEVGIRGVLTRGIIEESDAEINKEKLRDTRKLYNTWHNKADGRIKVMVGPHAPYTCSSSYLKEVVELAKELNTGIHIHVSETKKEVEESFQKHGKSPVKHLKDIGVFDVPTVAAHCVHVSDEDTEILKEMKVSPVYNPTSNAKLASGFAPVDQMLKKGINVALGTDGPASNNNLNMFEEIHFAATINKALNYDALAVPALEALKMATINGAKALLWDKEIGSIEVGKKADIVIIDIDKPHFYPHHNLISALAYTAQASDVDTVIINGKIIMENREIKTVDVEKVMYNVEKRAKNLIQR.

The Zn(2+) site is built by histidine 63 and histidine 65. Substrate is bound by residues glutamate 92, arginine 144, and histidine 184. Zn(2+) is bound at residue histidine 211. The substrate site is built by glutamate 214 and aspartate 299. Zn(2+) is bound at residue aspartate 299.

This sequence belongs to the metallo-dependent hydrolases superfamily. MTA/SAH deaminase family. Requires Zn(2+) as cofactor.

The catalysed reaction is S-adenosyl-L-homocysteine + H2O + H(+) = S-inosyl-L-homocysteine + NH4(+). It catalyses the reaction S-methyl-5'-thioadenosine + H2O + H(+) = S-methyl-5'-thioinosine + NH4(+). Functionally, catalyzes the deamination of 5-methylthioadenosine and S-adenosyl-L-homocysteine into 5-methylthioinosine and S-inosyl-L-homocysteine, respectively. Is also able to deaminate adenosine. The protein is 5-methylthioadenosine/S-adenosylhomocysteine deaminase of Thermoanaerobacter pseudethanolicus (strain ATCC 33223 / 39E) (Clostridium thermohydrosulfuricum).